Reading from the N-terminus, the 192-residue chain is Nucleosome assembly protein 1-like 5 (192 aa).

A compositionally biased stretch (polar residues) spans M1–P12. The segment at M1–E76 is disordered. Composition is skewed to low complexity over residues A15–A28 and G40–Q55. Residues V86–K112 are a coiled coil. The disordered stretch occupies residues A136–K192. Residues E140–A168 are compositionally biased toward acidic residues. Residues A177–K192 are compositionally biased toward basic and acidic residues.

The protein belongs to the nucleosome assembly protein (NAP) family.

The protein localises to the nucleus. The polypeptide is Nucleosome assembly protein 1-like 5 (NAP1L5) (Bos taurus (Bovine)).